The primary structure comprises 535 residues: uncharacterized protein (535 aa).

Residues 8 to 24 (LVVFGSLVFFFGLVKYF) traverse the membrane as a helical segment. A Glycyl lysine isopeptide (Lys-Gly) (interchain with G-Cter in ubiquitin) cross-link involves residue Lys-50. Residues Asp-316, Asp-327, His-412, Glu-452, and Glu-493 each contribute to the Mn(2+) site.

It belongs to the peptidase M24B family. It depends on Mn(2+) as a cofactor.

It is found in the membrane. This is an uncharacterized protein from Saccharomyces cerevisiae (strain ATCC 204508 / S288c) (Baker's yeast).